We begin with the raw amino-acid sequence, 278 residues long: Transcriptional regulator ICP22 homolog (278 aa).

Disordered regions lie at residues 1 to 42 (MFCT…RDTS) and 154 to 229 (CDVS…KRPQ). Residues 1-142 (MFCTSPATRG…PRGEDGFIEA (142 aa)) form an IE62-binding region. Composition is skewed to acidic residues over residues 155-169 (DVSD…DDDG) and 183-205 (AESS…DSCE).

The protein belongs to the herpesviridae ICP22 family. As to quaternary structure, interacts with IE62; this interaction modulates the function of IE62. Interacts with several components of host pre-initiation complex including GTF2E1, GTF2H2 and POLR2A; these interactions lead to repression of gene transcription. Interacts with host ASF1A; altering its ability to bind histones. Phosphorylated in vitro by host and by protein kinase ORF47.

Its subcellular location is the host cytoplasm. It localises to the host nucleus. It is found in the virion tegument. Its function is as follows. Immediate early (EI) protein that functions as a transcriptional regulator of cellular and viral mRNAs mainly by interacting with several general transcription factors thereby disorganizing the preinitiation complex at certain promoters. May additionally help to regulate levels of histones in virus-infected cells by interacting with host ASF1. By inhibiting host transcriptional program, IE63 plays a major role in the ability of VZV to overcome the innate immune response to the virus. This chain is Transcriptional regulator ICP22 homolog, found in Varicella-zoster virus (strain Dumas) (HHV-3).